A 196-amino-acid chain; its full sequence is GTP cyclohydrolase-2 (196 aa).

49–53 (RVHSE) is a binding site for GTP. The Zn(2+) site is built by Cys54, Cys65, and Cys67. Residues Gln70, 92–94 (EGR), and Thr114 contribute to the GTP site. Residue Asp126 is the Proton acceptor of the active site. The Nucleophile role is filled by Arg128. GTP is bound by residues Thr149 and Lys154.

The protein belongs to the GTP cyclohydrolase II family. As to quaternary structure, homodimer. Requires Zn(2+) as cofactor.

It carries out the reaction GTP + 4 H2O = 2,5-diamino-6-hydroxy-4-(5-phosphoribosylamino)-pyrimidine + formate + 2 phosphate + 3 H(+). It functions in the pathway cofactor biosynthesis; riboflavin biosynthesis; 5-amino-6-(D-ribitylamino)uracil from GTP: step 1/4. Catalyzes the conversion of GTP to 2,5-diamino-6-ribosylamino-4(3H)-pyrimidinone 5'-phosphate (DARP), formate and pyrophosphate. The chain is GTP cyclohydrolase-2 from Salmonella choleraesuis (strain SC-B67).